The following is a 496-amino-acid chain: Transcription termination factor MTERF9, chloroplastic (496 aa).

A chloroplast-targeting transit peptide spans 1-44 (MAGFSLYCFKNPRILFTLPSESPLFVLGSDKCSPATRRPSRKTR). Disordered regions lie at residues 57 to 90 (IINP…DDDW) and 102 to 155 (YEKK…SWRL). The span at 74-90 (DSDEDDDDDDDDDDDDW) shows a compositional bias: acidic residues. Residues 105–123 (KKPKSHKQTIAKKSVKKGI) show a composition bias toward basic residues. Positions 146 to 155 (SEKKKESWRL) are enriched in basic and acidic residues.

Belongs to the mTERF family.

It localises to the plastid. It is found in the chloroplast. Functionally, transcription termination factor required for processing and steady-state levels of plastid transcripts. May play a role in response to abiotic stresses. This is Transcription termination factor MTERF9, chloroplastic from Arabidopsis thaliana (Mouse-ear cress).